The chain runs to 1331 residues: MQHLLEYMPEDLPVRDTDSSPLLKGTSGKNVRAQPHLGRMNQKELNCRRLHLHEEPTLVKEPSPKQRDKNRRRRTNVQRSTTTQPDLRTLAVLQEPERRRRPWVSASPSPSAPPRAPVPGRKAHVQRLCPSTAVGSAQPRVHAGRRLPHIAGPNDRRSHTAPPAFKDYVADKNTRIEITREPSQLTHTMTTDSTHVEEIPRSPEKTSKVEKPEQRSSEECTQKAAELRASIKENVELIRLKKLLQERNTSLAATEAQLTRVQEAYEDLLQKNQGILDTAHNAFLSQVNELKAELSEESKKAVSLRTQLGDVSILQITLKEFQVRVEDLEKERKLLSDSYDRLLENMLDSSHQPLDSSHQPHWSTELTGKQLPPQVCPLLDQMGTALEETKVFRQATNKAAQDGKLKFQDTDILYQHEQEEESLQSTATVASSPEELCELAAQPTLLPQTDQRESSEPKAQDENDLSQVLSELQVSHAETTLELEKTRDMLLLQRKINMCYQEELEATLTKADRENRDHEEKLERLNHLLDFKNSRIKQLEGILRSHGLPTSEQLKDVAYGTLPPSLCLEPLAAHRGDDEVDMSLLHPSENLFELHVHQAFLTPAALTQAGDTQPTTFCTYSFYDFETHCTPLSTGPQPLYDFTSQYVVQADYLLLHYLQGTSVRLDLHQAMASEYHVLATGWISLDKVLGTVERVHGLATLAGAGGEDLGVLEYWMRLCLPLKPSLQACNKRKKAQAYLSVSVLGARKVQSNESRSETWAPQNELRVEITRCCGLRSRRLGRQPSPYVMYRFFTFPDHDTIIIPASSNPYFKDQALFPVLVTSDLDQYLRREALSVYVFDDEDPEPGSYLGRAQVPLLPLAQNKSIKGDFNLTDSGEKSNGSIKVQLDWKSHYLAPEGFQMSEAEKPEGEEKEEEGGEEEVKEEEVEEEEEEEEEEEEVKEEKEEEEEEEREEEEEKEEEKEEEEEEDEKEEEEEEEEEEEEEEEDENKDVLEASFTEEWVPFFSQDQIASTEIPIEAGQYPEKRKPPVIAEKKEREHQVASYSRRKHSKKPGVQDKNRMEYLSCNILNGNTQQMHYTEWKFSGLKKAEDGGLKAQDKREEPPSPRSALRQEHPSHPRNAFSLADQESCEQASEVSETQTTDSDDIIVTPQAQTVPKADSEKMCIEIVSLAFCPEADVMSDETIQQVYVEYKFCDLPLSETETPMSLRKPRAGEEIHFHFSKVIDLDPVEHQSRRQFLFAMLHAQDSDEGRFKFTVVSDPLDEEKKECQDIGYAYLELWQIFQSGKDILEQELEIVSPRNQAIQIGRLKVSLQAAAALHGIYKEMTEDLFS.

Disordered stretches follow at residues 1 to 165 (MQHL…PPAF), 183 to 220 (SQLT…SEEC), and 351 to 374 (HQPL…LPPQ). Over residues 41-67 (NQKELNCRRLHLHEEPTLVKEPSPKQR) the composition is skewed to basic and acidic residues. Composition is skewed to polar residues over residues 77 to 86 (VQRSTTTQPD) and 183 to 193 (SQLTHTMTTDS). The segment covering 194-220 (THVEEIPRSPEKTSKVEKPEQRSSEEC) has biased composition (basic and acidic residues). Coiled coils occupy residues 236-352 (ELIR…SSHQ) and 498-546 (MCYQ…LRSH). Positions 351–367 (HQPLDSSHQPHWSTELT) are enriched in polar residues. The C2 domain maps to 745 to 870 (GARKVQSNES…AQNKSIKGDF (126 aa)). Disordered regions lie at residues 899–1057 (FQMS…VQDK) and 1088–1146 (AEDG…SDDI). A coiled-coil region spans residues 908–999 (EGEEKEEEGG…DVLEASFTEE (92 aa)). Residues 910–988 (EEKEEEGGEE…EEEEEEEDEN (79 aa)) show a composition bias toward acidic residues. Composition is skewed to basic and acidic residues over residues 1022–1039 (PEKR…REHQ) and 1088–1115 (AEDG…EHPS). Polar residues predominate over residues 1129-1141 (CEQASEVSETQTT). The interval 1136–1326 (SETQTTDSDD…ALHGIYKEMT (191 aa)) is interaction with RPGR.

This sequence belongs to the RPGRIP1 family. Interacts with NPHP4. Interacts with NEK4. Forms homodimers and elongated homopolymers. Interacts with RPGR. Interacts with SPATA7. Interacts with CEP290/NPHP6; mediating the association between RPGR and CEP290/NPHP6. Expressed in the retina (at protein level).

The protein localises to the cell projection. It localises to the cilium. In terms of biological role, may function as scaffolding protein. Required for normal location of RPGR at the connecting cilium of photoreceptor cells. Required for normal disk morphogenesis and disk organization in the outer segment of photoreceptor cells and for survival of photoreceptor cells. The sequence is that of X-linked retinitis pigmentosa GTPase regulator-interacting protein 1 (Rpgrip1) from Mus musculus (Mouse).